Reading from the N-terminus, the 153-residue chain is NADPH-dependent 7-cyano-7-deazaguanine reductase (153 aa).

Over residues 1–17 (MTDTRNLTQLGSKTQAP) the composition is skewed to polar residues. Residues 1–23 (MTDTRNLTQLGSKTQAPASPEAA) form a disordered region. Cys-51 acts as the Thioimide intermediate in catalysis. Asp-58 acts as the Proton donor in catalysis. Substrate contacts are provided by residues 73–75 (VES) and 92–93 (HE).

Belongs to the GTP cyclohydrolase I family. QueF type 1 subfamily.

It localises to the cytoplasm. The catalysed reaction is 7-aminomethyl-7-carbaguanine + 2 NADP(+) = 7-cyano-7-deazaguanine + 2 NADPH + 3 H(+). The protein operates within tRNA modification; tRNA-queuosine biosynthesis. Functionally, catalyzes the NADPH-dependent reduction of 7-cyano-7-deazaguanine (preQ0) to 7-aminomethyl-7-deazaguanine (preQ1). The polypeptide is NADPH-dependent 7-cyano-7-deazaguanine reductase (Chelativorans sp. (strain BNC1)).